An 835-amino-acid chain; its full sequence is MNQIEQKWQHIWQEEKAFEVSNASSKPKYYVLEMLPYPSGKIHVGHVRNYSIGDVIARFMTMQGFNVLHPMGWDAFGLPAENAAIKNNSHPKKWTYSNIENMKKQLKSMGFSYDWSREINSCDPEYYKHEQKFFLELYERNLAYQKESLVNWDPVDNTVLANEQVVDGRGWRSGAIVAKRYLKQWFLKITDYAEELLNEIQNLKEWPEAVRSMQEKWIGKSIGANFHFKIKDNEETTIEVFSTKPETIFGASFIGIAFNHPIIERLVSKTPEILAFITKCSHITGSSELEKAEKEGVFTGLFVIHPFDSNIVLPVIITNFVLMDYGTGAIFGCPANDERDHELAVKMNLSIKQVIKADMDVQKTAYTEDGILVNSDFLNGLTSNEAKQEVIGEFEKLGIGKRSVNYRLKDWGISRQRFWGCPIPIIHCETCGIVPVPYKDLPVTLPDDVNFDGHGNPLDHHPSWKHVDCPKCDKPAVRETDTFDTFFESSWYFTRYCNSNAIEMTDKKACDYWLPVDKYIGGIEHAVMHLLYARFFTKVMNEQKYVSVREPFKGLFTQGMVLHATYKDEHNNWLYPEEVVKKGNEFFHKESNNRVVQGRIEKMSKSKKNLIDLETMQEQYGADAIRLFVLSDSPPEKDLEWSASGIEGCSRFINKLEYMFKAIDSLKDDVNSEINKELNRLVHFTIKLVAEDIKHFALNRAIARMRELSNAISAEISKDKIDVKTVRHGFNVLVQLLNPFIPHITEEIWQKLGNKKRLYNSSFPAFDESMLELDTYIMAVQVNGKLRDTYEFKTSVSEDEIKQVTVSLPKVQKFLEGKEPKKIILVPRKIVNILV.

A 'HIGH' region motif is present at residues 36–46 (PYPSGKIHVGH). The short motif at 602-606 (KMSKS) is the 'KMSKS' region element. Lysine 605 is an ATP binding site.

This sequence belongs to the class-I aminoacyl-tRNA synthetase family.

Its subcellular location is the cytoplasm. It carries out the reaction tRNA(Leu) + L-leucine + ATP = L-leucyl-tRNA(Leu) + AMP + diphosphate. This is Leucine--tRNA ligase from Rickettsia massiliae (strain Mtu5).